The sequence spans 487 residues: ATP-dependent rRNA helicase RRP3 (487 aa).

The segment at 22 to 67 (IKRKALEKQQQAHANEPSPSDEDSAQSNSKDSNSNEQPEESEEIFE) is disordered. A Q motif motif is present at residues 67-95 (ESFTELDLVPELIEACKNLNYNKPTPIQS). One can recognise a Helicase ATP-binding domain in the interval 98-270 (IPPALKGSDI…RASLTNPVKC (173 aa)). 111-118 (AQTGSGKT) serves as a coordination point for ATP. A DEAD box motif is present at residues 217 to 220 (DEAD). The region spanning 298-442 (LIYLLNEFIG…ENVDKDAILA (145 aa)) is the Helicase C-terminal domain. The tract at residues 459-487 (NRRNKEKQARGKGRRGRMATRDNMDREER) is disordered. A compositionally biased stretch (basic and acidic residues) spans 477 to 487 (ATRDNMDREER).

It belongs to the DEAD box helicase family. DDX47/RRP3 subfamily. As to quaternary structure, interacts with the SSU processome.

Its subcellular location is the nucleus. The catalysed reaction is ATP + H2O = ADP + phosphate + H(+). Its function is as follows. ATP-dependent rRNA helicase required for pre-ribosomal RNA processing. Involved in the maturation of the 35S-pre-rRNA and to its cleavage to mature 18S rRNA. The polypeptide is ATP-dependent rRNA helicase RRP3 (Kluyveromyces lactis (strain ATCC 8585 / CBS 2359 / DSM 70799 / NBRC 1267 / NRRL Y-1140 / WM37) (Yeast)).